The sequence spans 1129 residues: PAN2-PAN3 deadenylation complex catalytic subunit PAN2 (1129 aa).

WD repeat units follow at residues 20 to 60 (PPAV…YTSY), 104 to 146 (PDFK…DTLP), 148 to 183 (DAQYTIMKRAGQYLCAATKTGGIHILDSNSLSVIKV), 186 to 226 (GHTG…FSLK), and 280 to 319 (LYDSYLAGFEMAPSGEAFALADSNSNVHLWGSPAKVHFPE). The tract at residues 320 to 457 (YSNPTEFADH…DLHLDDVTRK (138 aa)) is linker. A disordered region spans residues 396 to 427 (RTKRRNQIEVTRQTDRSSDSLTPPKFLSEKSR). In terms of domain architecture, USP spans 458-830 (DVPAMYGNVE…LPSVLTFQTK (373 aa)). The region spanning 880–1052 (VAIDAEFIRL…IEDATTALKL (173 aa)) is the Exonuclease domain. D883, E885, D992, and D1045 together coordinate a divalent metal cation. The interval 1083–1129 (APGSGNRNSMPAGMTATGAGRDTPEPMTTPKKGGAFGGVGFRSPMRR) is disordered.

Belongs to the peptidase C19 family. PAN2 subfamily. Forms a heterotrimer with an asymmetric homodimer of the regulatory subunit PAN3 to form the poly(A)-nuclease (PAN) deadenylation complex. A divalent metal cation is required as a cofactor.

The protein localises to the cytoplasm. The catalysed reaction is Exonucleolytic cleavage of poly(A) to 5'-AMP.. Positively regulated by the regulatory subunit PAN3. Its function is as follows. Catalytic subunit of the poly(A)-nuclease (PAN) deadenylation complex, one of two cytoplasmic mRNA deadenylases involved in mRNA turnover. PAN specifically shortens poly(A) tails of RNA and the activity is stimulated by poly(A)-binding protein PAB1. PAN deadenylation is followed by rapid degradation of the shortened mRNA tails by the CCR4-NOT complex. Deadenylated mRNAs are then degraded by two alternative mechanisms, namely exosome-mediated 3'-5' exonucleolytic degradation, or deadenylation-dependent mRNA decaping and subsequent 5'-3' exonucleolytic degradation by XRN1. May also be involved in post-transcriptional maturation of mRNA poly(A) tails. This is PAN2-PAN3 deadenylation complex catalytic subunit PAN2 from Phaeosphaeria nodorum (strain SN15 / ATCC MYA-4574 / FGSC 10173) (Glume blotch fungus).